A 629-amino-acid chain; its full sequence is Glycerol-3-phosphate dehydrogenase SDP6, mitochondrial (629 aa).

The N-terminal 48 residues, 1 to 48, are a transit peptide targeting the mitochondrion; the sequence is MSLASIRRLAAGAAVIAAASGGAVYLSPSVASSDKGGGPILDSLRRRL. 75-103 is a binding site for FAD; sequence DVLVIGGGATGSGVALDAVTRGLRVGLVE.

Belongs to the FAD-dependent glycerol-3-phosphate dehydrogenase family. FAD is required as a cofactor. As to expression, expressed in germinating seedlings. Also detected in roots, leaves, flowers, developing siliques and germinating seeds.

It is found in the mitochondrion inner membrane. The enzyme catalyses a quinone + sn-glycerol 3-phosphate = dihydroxyacetone phosphate + a quinol. It participates in polyol metabolism; glycerol degradation via glycerol kinase pathway; glycerone phosphate from sn-glycerol 3-phosphate (anaerobic route): step 1/1. Functionally, required for glycerol catabolism and involved in NADH/NAD(+) homeostasis. Essential for postgerminative growth and seedling establishment. The chain is Glycerol-3-phosphate dehydrogenase SDP6, mitochondrial from Arabidopsis thaliana (Mouse-ear cress).